Here is a 1944-residue protein sequence, read N- to C-terminus: Anaphase-promoting complex subunit 1 (1944 aa).

Residues S51, S60, S202, and S286 each carry the phosphoserine modification. T291 is subject to Phosphothreonine. The disordered stretch occupies residues L305 to S343. A phosphoserine mark is found at S313, S341, S343, S355, S362, S373, and S377. Residues S323–S343 are compositionally biased toward low complexity. The interval S373 to L396 is disordered. The segment covering S384 to S394 has biased composition (low complexity). A Phosphothreonine modification is found at T537. Phosphoserine is present on residues S547 and S555. Position 571 is a phosphotyrosine (Y571). Phosphoserine occurs at positions 686, 688, and 916. Residues K994 to M1016 are disordered. The span at V998–T1007 shows a compositional bias: polar residues. PC repeat units follow at residues A1297–L1325, G1366–L1404, G1467–A1501, and L1520–Y1552.

It belongs to the APC1 family. The mammalian APC/C is composed at least of 14 distinct subunits ANAPC1, ANAPC2, CDC27/APC3, ANAPC4, ANAPC5, CDC16/APC6, ANAPC7, CDC23/APC8, ANAPC10, ANAPC11, CDC26/APC12, ANAPC13, ANAPC15 and ANAPC16 that assemble into a complex of at least 19 chains with a combined molecular mass of around 1.2 MDa; APC/C interacts with FZR1 and FBXO5. Phosphorylated. Phosphorylation on Ser-355 occurs specifically during mitosis.

It participates in protein modification; protein ubiquitination. Component of the anaphase promoting complex/cyclosome (APC/C), a cell cycle-regulated E3 ubiquitin ligase that controls progression through mitosis and the G1 phase of the cell cycle. The APC/C complex acts by mediating ubiquitination and subsequent degradation of target proteins: it mainly mediates the formation of 'Lys-11'-linked polyubiquitin chains and, to a lower extent, the formation of 'Lys-48'- and 'Lys-63'-linked polyubiquitin chains. The APC/C complex catalyzes assembly of branched 'Lys-11'-/'Lys-48'-linked branched ubiquitin chains on target proteins. The polypeptide is Anaphase-promoting complex subunit 1 (ANAPC1) (Homo sapiens (Human)).